Consider the following 430-residue polypeptide: MATDAAELFKEALSLFPGGVNSPVRAMKHLPTPLIVKRAEGAFLYTIDGVKLIDYCMGFGPLILGHRHPTVLEAVRRSLEDGWLYGALTRNEVELAKEINSSIRSVEMIRFVNTGTEAVMNAVRLARGFTGRRYIVKFEGNYHGAFDYVLVKAGSGAATWGVPTSAGILEDAVKYTLVVPYNDVEALERVFREHGSEIALLLVEPIAGNYGLIIPDLEFIKATRELTERYGALLLFDEVITGFRVGLNGAQGLFGIKPDLTTLGKIIGGGFPIGAFGGRRDVMSMITPQGPVYNAGTFNAHPVSVAAGLATIRVIKSGGVYEVANEAAERITEAILDSASRSGFDIVVKRIASMFQFYFKKGDVKTPADVRASDEKLYLTFHREALSRGVYFTPSQYEVNFTSAAHSRDVVDETIRVIEEVFKALKTKAH.

N6-(pyridoxal phosphate)lysine is present on lysine 265.

It belongs to the class-III pyridoxal-phosphate-dependent aminotransferase family. HemL subfamily. Pyridoxal 5'-phosphate serves as cofactor.

The protein localises to the cytoplasm. The catalysed reaction is (S)-4-amino-5-oxopentanoate = 5-aminolevulinate. It participates in porphyrin-containing compound metabolism; protoporphyrin-IX biosynthesis; 5-aminolevulinate from L-glutamyl-tRNA(Glu): step 2/2. This is Glutamate-1-semialdehyde 2,1-aminomutase from Caldivirga maquilingensis (strain ATCC 700844 / DSM 13496 / JCM 10307 / IC-167).